Reading from the N-terminus, the 104-residue chain is PE-PGRS family protein PE_PGRS60 (104 aa).

The 60-residue stretch at 1–60 (MSYVIAAPEALVAAATDLATLGSTIGAANAAAAGSTTALLTAGADEVSAAIAAYSECTAR) folds into the PE domain. The tract at residues 64-104 (HSVRGRRRSMSGSCRPWPQVGAPMRPPRPPASRRCRARSIC) is disordered. The span at 94–104 (ASRRCRARSIC) shows a compositional bias: basic residues.

The protein belongs to the mycobacterial PE family. PGRS subfamily.

Functionally, binds fibronectin. May contribute to pathogenicity. The chain is PE-PGRS family protein PE_PGRS60 from Mycobacterium tuberculosis (strain ATCC 25618 / H37Rv).